A 253-amino-acid polypeptide reads, in one-letter code: Ribonuclease HII (253 aa).

The 192-residue stretch at 30–221 (GPVAGVDEVG…VRRLVVDGEP (192 aa)) folds into the RNase H type-2 domain. A divalent metal cation contacts are provided by Asp36, Glu37, and Asp130.

It belongs to the RNase HII family. Requires Mn(2+) as cofactor. It depends on Mg(2+) as a cofactor.

It is found in the cytoplasm. The enzyme catalyses Endonucleolytic cleavage to 5'-phosphomonoester.. In terms of biological role, endonuclease that specifically degrades the RNA of RNA-DNA hybrids. This is Ribonuclease HII from Mycolicibacterium gilvum (strain PYR-GCK) (Mycobacterium gilvum (strain PYR-GCK)).